The primary structure comprises 1325 residues: MGTASSLVSPTGGEVIEDTYGAGGGEACEIPVEVKPKARLLRSSFRRGAGAGPGSLPRAAGGGGLLGASFKSTGSSVPELEYAAAEFERLKKEYEIFRVSKNQELLSMGRREAKLDTENKRLRAELQALQKTYQKILREKEGALEAKYQAMERAVTFEHDRDRVKRQFKIFRETKENEIQDLLRAKRELESKLQRLQAQGIQVFDPGESDSDDNCTDVTAAGTQCEYWASRALGSEHSIGSMIQLPQPFRGPEFAHSSIDVEGPFANINRDDWDAAVAGLLQATPLFSHSLWSHPVRCYLIYTDETQPEMELFLKDHSPKLKRMCETMGYFFLAVYFPLDVENQYLTVRKWEIEKSSLVILFLHSTLPSFLLEDCEEAFLQNPEGKPGLIYHRLEDGKVTCDSVQQFLDQVSNLGKTTKAKIIEHSGDPAEGVCKIYVGVEKIIKQDILGLENTDVEEKDGGREDSTPEEDDFGDVLWDIHDEQEQMEAFQQTSSSAHELGFEKYYQRLDDLVVAPAPIPPLLVSGGPGSGKSLLLSKWIQLQQKHFPNTLILSHFVGRPMSTSSESSLIIKRLTLKLMQHFWAVSALTLDPAKLLEEFPHWLEKLSARHQGSIIIIIDSIDQVQQVEKHMKWLIDPLPVNVRVIVSVNVETCPTAWRLWPTLHLDPLSPKDAISIITAECYSMDVRLSREQEKMLEQHCRPATTRHALYVTLFSKMMACAGRGGNVAETLHQCLQCQDTVSLYKLVLHHVRESMPSDRDKEWMTQILCLINVSHNGVSESELMELYPEMSWLSLTSIVHSLHKMHLLTYSCGLLRFQHLQAWETVRLQYLEDPALVSSYREKLISYFASQLSQDRVTWRSADELPWLFQQQGSKQKLHSCLLNLLVAQNLYKRGHFAELLSYWQFVGKDKGAMATEYFESLKQYENSEGEENMLCLADLYETLGRFLKDLGLLSQAVVPLQRSLEIRETALDPDHPRVAQSLHQLAGVYVQWKKFGDAEQLYKQALEISENAYGADHPHAARELEALATLYHKQNKYEQAEHFRKKSVIIRQQATRRKGSLYGFALLRRRALQLEELTLGKDKPENARTLNELGVLYFLQNNLETAEQFLKRSLEMRERVLGPDHPDCAQSLNNLAALCNEKKQYEKAEELYERALDIRRRALAPDHPSLAYTVKHLAILYKKTGKVDKAVPLYELAVEIRQKSFGPKHPSVATALVNLAVLHSQMKKHSEALPLYERALKIYEDSLGRMHPRVGETLKNLAVLSYEEGNFEKAAELYKRAMEIKEAETSLLGGKAPSRQSSSGDTFLFKTTHSPNVFLPQGQS.

The interval 1–20 (MGTASSLVSPTGGEVIEDTY) is disordered. G2 is lipidated: N-myristoyl glycine. A coiled-coil region spans residues 107–203 (SMGRREAKLD…QRLQAQGIQV (97 aa)). 11 TPR repeats span residues 467–500 (TPEE…AHEL), 881–914 (CLLN…KGAM), 916–937 (TEYF…MLCL), 938–971 (ADLY…RETA), 980–1013 (AQSL…SENA), 1022–1055 (AREL…RQQA), 1088–1121 (ARTL…RERV), 1130–1163 (AQSL…RRRA), 1172–1205 (AYTV…RQKS), 1214–1247 (ATAL…YEDS), and 1256–1289 (GETL…KEAE). Residues 1293–1325 (LGGKAPSRQSSSGDTFLFKTTHSPNVFLPQGQS) form a disordered region. Positions 1299–1325 (SRQSSSGDTFLFKTTHSPNVFLPQGQS) are enriched in polar residues.

In terms of assembly, interacts with NPHP1 and INVS/NPHP2. Interacts (when myristoylated) with UNC119 and UNC119B; interaction is required for localization to cilium. Interacts with CEP164. Component of a complex containing at least ANKS6, INVS, NEK8 and NPHP3. ANKS6 may organize complex assembly by linking INVS and NPHP3 to NEK8 and INVS may target the complex to the proximal ciliary axoneme.

The protein localises to the cell projection. It is found in the cilium. Functionally, required for normal ciliary development and function. Inhibits disheveled-1-induced canonical Wnt-signaling activity and may also play a role in the control of non-canonical Wnt signaling that regulates planar cell polarity. Probably acts as a molecular switch between different Wnt signaling pathways. Required for proper convergent extension cell movements. The protein is Nephrocystin-3 (Nphp3) of Mus musculus (Mouse).